Here is a 255-residue protein sequence, read N- to C-terminus: tRNA (guanine-N(7)-)-methyltransferase (255 aa).

Positions 64, 89, 116, and 138 each coordinate S-adenosyl-L-methionine. Asp138 is an active-site residue. Substrate is bound by residues Lys142, Asp174, and 212-215 (TRYE).

It belongs to the class I-like SAM-binding methyltransferase superfamily. TrmB family.

The catalysed reaction is guanosine(46) in tRNA + S-adenosyl-L-methionine = N(7)-methylguanosine(46) in tRNA + S-adenosyl-L-homocysteine. Its pathway is tRNA modification; N(7)-methylguanine-tRNA biosynthesis. In terms of biological role, catalyzes the formation of N(7)-methylguanine at position 46 (m7G46) in tRNA. This chain is tRNA (guanine-N(7)-)-methyltransferase, found in Rhodospirillum rubrum (strain ATCC 11170 / ATH 1.1.1 / DSM 467 / LMG 4362 / NCIMB 8255 / S1).